Reading from the N-terminus, the 262-residue chain is MWITQEITPYLRKEYTIEAKLLDVRSDHNILEIFKSNDFGEIAMLNSQLLFKNFLHIESELLAHMGGCTKKELKEVLIVDGFDLELAHQLFKYDTHVDFVQADEKILDSFISFFPHFHGVKNNKNFTHAKQFLDLDIKKYDLIVCLQEPDKHKIDGLKRTLKEDGVFISVAKHPLLEHVSMQNALKNMGEFFSIVMPFVAPLRILSNKGYIYASLKTHPLKDLIAQKIEALKNVGYYNEDIHRAAFALPKNLQEILKENIKS.

The 249-residue stretch at 1-249 (MWITQEITPY…DIHRAAFALP (249 aa)) folds into the PABS domain. Asn29 serves as a coordination point for S-methyl-5'-thioadenosine. Residue Asp83 coordinates spermidine. Asp155 acts as the Proton acceptor in catalysis.

This sequence belongs to the spermidine/spermine synthase family. In terms of assembly, homodimer or homotetramer.

It localises to the cytoplasm. It catalyses the reaction S-adenosyl 3-(methylsulfanyl)propylamine + putrescine = S-methyl-5'-thioadenosine + spermidine + H(+). It functions in the pathway amine and polyamine biosynthesis; spermidine biosynthesis; spermidine from putrescine: step 1/1. Its function is as follows. Catalyzes the irreversible transfer of a propylamine group from the amino donor S-adenosylmethioninamine (decarboxy-AdoMet) to putrescine (1,4-diaminobutane) to yield spermidine. This is Polyamine aminopropyltransferase from Helicobacter acinonychis (strain Sheeba).